The chain runs to 842 residues: MSNILRKVIENDKGELRKLEKIAKKVESYADYMESLSDKDLQAKTPEFKQRYQNGETLEQLLPEAFAVVREAARRVLGLYPYRVQIMGGIVLHNGDVPEMRTGEGKTLTATMPVYLNALAGKGVHVITVNEYLSTRDATEMGEVYSWLGLSVGINLAAKSPAEKREAYLCDITYSTNSEVGFDYLRDNMVVRQEDMVQRPLNFALVDEVDSVLIDEARTPLIVSGAVSSETNQLYIRADMFVKTLDSVDYIIDVPTKTIGLSDSGIDKAESYFNLSNLYDIENVALTHFVDNALRANYIMLLDIDYVVSEEGEILIVDQFTGRTMEGRRFSDGLHQAIEAKEGVRIQEESKTSASITYQNMFRMYKKLAGMTGTAKTEEEEFREVYNMRIIPIPTNRPIARIDHTDLLYATLNSKFKAVVADVKARYEKGQPVLVGTVAVETSDLISKKLVEAGIPHEVLNAKNHFKEAQIIMNAGQRGAVTIATNMAGRGTDIKLGEGVRELGGLCVIGTERHESRRIDNQLRGRSGRQGDPGESQFYLSLEDELMRRFGTDRIKAFLDRMNHDDEDIVIKSRMLSRQVESAQKRVEGNNYDTRKQVLQYDDVMREQREIIYANRRDVITANRDLGPEIKAMIKRTIDRAVDAHSRTNRKDAIDAIVTFARTSIVPEETIGAKELRGLKDDQIKDKLYQRALEIYDKQLSKLRDQDAILEFQKVLILMIVDNKWTEHIDALDQLRNAVGLRGYAQNNPVVEYQSEGFKMFQDMIGAIEFDVTRTMMKAQIHEQERERATQYATTTAAQNIQSQAIGADFDSSADFSRVERNDACPCHSGKKFKNCHGRKAF.

ATP-binding positions include Gln-85, 103–107, and Asp-493; that span reads GEGKT. The Zn(2+) site is built by Cys-825, Cys-827, Cys-836, and His-837.

The protein belongs to the SecA family. Monomer and homodimer. Part of the essential Sec protein translocation apparatus which comprises SecA, SecYEG and auxiliary proteins SecDF. Other proteins may also be involved. It depends on Zn(2+) as a cofactor.

The protein localises to the cell membrane. It is found in the cytoplasm. The catalysed reaction is ATP + H2O + cellular proteinSide 1 = ADP + phosphate + cellular proteinSide 2.. Part of the Sec protein translocase complex. Interacts with the SecYEG preprotein conducting channel. Has a central role in coupling the hydrolysis of ATP to the transfer of proteins into and across the cell membrane, serving as an ATP-driven molecular motor driving the stepwise translocation of polypeptide chains across the membrane. The chain is Protein translocase subunit SecA from Streptococcus equi subsp. zooepidemicus (strain MGCS10565).